The sequence spans 142 residues: Small heat shock protein IbpB (142 aa).

The sHSP domain maps to 26–137 (SGESQSFPPY…PPQRIAINER (112 aa)).

This sequence belongs to the small heat shock protein (HSP20) family. In terms of assembly, homodimer. Forms homomultimers of about 100-150 subunits at optimal growth temperatures. Conformation changes to oligomers at high temperatures or high ionic concentrations. The decrease in size of the multimers is accompanied by an increase in chaperone activity.

The protein localises to the cytoplasm. Functionally, associates with aggregated proteins, together with IbpA, to stabilize and protect them from irreversible denaturation and extensive proteolysis during heat shock and oxidative stress. Aggregated proteins bound to the IbpAB complex are more efficiently refolded and reactivated by the ATP-dependent chaperone systems ClpB and DnaK/DnaJ/GrpE. Its activity is ATP-independent. The protein is Small heat shock protein IbpB of Salmonella typhi.